Here is a 374-residue protein sequence, read N- to C-terminus: Cell division protein C (374 aa).

The MIT domain maps to 11-73 (ARKYAINAVK…YKRRIEVLKE (63 aa)). An ATP-binding site is contributed by 144 to 151 (GPPGCGKT).

This sequence belongs to the AAA ATPase family. Interacts with CdvB.

It localises to the cytoplasm. It is found in the nucleoid. Its function is as follows. Part of a cell division machinery. The CdvA, CdvB and CdvC proteins polymerize between segregating nucleoids and persist throughout cell division, forming a successively smaller structure during constriction. This Sulfolobus acidocaldarius (strain ATCC 33909 / DSM 639 / JCM 8929 / NBRC 15157 / NCIMB 11770) protein is Cell division protein C.